A 173-amino-acid chain; its full sequence is MGKPCHFAQFDLQPAFLVDLDELGQRYRELVRSVHPDRFADAPEREQRLALERAAQLNEAYQTLKSAPRRALYLLTLSGHELPLEATVQDPEFLLQQMQLREELEELQDSADLAGVATFKRRLKAAQAELEREFAACWDDAQRREEAERLVRRMQFLDKLAQEVRQLEERLDD.

In terms of domain architecture, J spans C5–L77.

It belongs to the HscB family. Interacts with HscA and stimulates its ATPase activity.

Its function is as follows. Co-chaperone involved in the maturation of iron-sulfur cluster-containing proteins. Seems to help targeting proteins to be folded toward HscA. This Pseudomonas aeruginosa (strain UCBPP-PA14) protein is Co-chaperone protein HscB homolog.